Reading from the N-terminus, the 56-residue chain is Large ribosomal subunit protein uL30 (56 aa).

This sequence belongs to the universal ribosomal protein uL30 family. In terms of assembly, part of the 50S ribosomal subunit.

The chain is Large ribosomal subunit protein uL30 from Nitratidesulfovibrio vulgaris (strain DSM 19637 / Miyazaki F) (Desulfovibrio vulgaris).